The chain runs to 105 residues: uncharacterized protein (105 aa).

The region spanning 33–100 is the Cupin type-2 domain; the sequence is LYALDAGTTD…SEDLRVLVVF (68 aa).

This is an uncharacterized protein from Streptomyces coelicolor (strain ATCC BAA-471 / A3(2) / M145).